Here is a 307-residue protein sequence, read N- to C-terminus: Cyclin-dependent kinase 5 activator 1 (307 aa).

Residue Gly2 is the site of N-myristoyl glycine attachment. Ser8 is modified (phosphoserine; by CDK5). The interval 97–133 is disordered; that stretch reads TFAQPPPAQPPAPPASQLSGSQTGVSSSVKKAPHPAI. Pro residues predominate over residues 100 to 110; it reads QPPPAQPPAPP. A compositionally biased stretch (polar residues) spans 112-125; that stretch reads SQLSGSQTGVSSSV. Residue Thr138 is modified to Phosphothreonine; by CDK5.

Belongs to the cyclin-dependent kinase 5 activator family. As to quaternary structure, heterodimer composed of a catalytic subunit CDK5 and a regulatory subunit CDK5R1 (p25) and macromolecular complex composed of at least CDK5, CDK5R1 (p35) and CDK5RAP1 or CDK5RAP2 or CDK5RAP3. Only the heterodimer shows kinase activity. Interacts with EPHA4 and NGEF; may mediate the activation of NGEF by EPHA4. Interacts with RASGRF2. The complex p35/CDK5 interacts with CLOCK. The p35 form is proteolytically cleaved by calpain, giving rise to the p25 form. P35 has a 5 to 10 fold shorter half-life compared to p25. The conversion results in deregulation of the CDK5 kinase: p25/CDK5 kinase displays an increased and altered tau phosphorylation in comparison to the p35/CDK5 kinase in vivo. Post-translationally, myristoylated. A proper myristoylation signal is essential for the proper distribution of p35. In terms of processing, phosphorylation at Ser-8 and Thr-138 by CDK5 prevents calpain-mediated proteolysis. Ubiquitinated, leading to its degradation: degradation of p35 by proteasome results in down-regulation of CDK5 activity. During this process, CDK5 phosphorylates p35 and induces its ubiquitination and subsequent degradation. Ubiquitinated by the CRL2(FEM1B) complex, which recognizes the -Gly-Leu-Asp-Arg C-degron at the C-terminus, leading to its degradation. Brain and neuron specific.

It is found in the cell membrane. It localises to the cell projection. The protein resides in the neuron projection. Its subcellular location is the nucleus. The protein localises to the cytoplasm. It is found in the perinuclear region. It localises to the perikaryon. In terms of biological role, p35 is a neuron specific activator of CDK5. The complex p35/CDK5 is required for neurite outgrowth and cortical lamination. Involved in dendritic spine morphogenesis by mediating the EFNA1-EPHA4 signaling. Activator of TPKII. The complex p35/CDK5 participates in the regulation of the circadian clock by modulating the function of CLOCK protein: phosphorylates CLOCK at 'Thr-451' and 'Thr-461' and regulates the transcriptional activity of the CLOCK-BMAL1 heterodimer in association with altered stability and subcellular distribution. The sequence is that of Cyclin-dependent kinase 5 activator 1 (Cdk5r1) from Rattus norvegicus (Rat).